The following is a 432-amino-acid chain: 5'-deoxyadenosine deaminase (432 aa).

Residues His63 and His65 each coordinate Zn(2+). 2 residues coordinate substrate: Glu92 and His184. Zn(2+) is bound at residue His211. The substrate site is built by Glu214 and Asp299. Position 299 (Asp299) interacts with Zn(2+).

Belongs to the metallo-dependent hydrolases superfamily. MTA/SAH deaminase family. In terms of assembly, homotetramer. The cofactor is Zn(2+).

The catalysed reaction is 5'-deoxyadenosine + H2O + H(+) = 5'-deoxyinosine + NH4(+). It carries out the reaction S-adenosyl-L-homocysteine + H2O + H(+) = S-inosyl-L-homocysteine + NH4(+). It catalyses the reaction S-methyl-5'-thioadenosine + H2O + H(+) = S-methyl-5'-thioinosine + NH4(+). The enzyme catalyses adenosine + H2O + H(+) = inosine + NH4(+). Its pathway is amino-acid biosynthesis; S-adenosyl-L-methionine biosynthesis. In terms of biological role, catalyzes the deamination of three SAM-derived enzymatic products, namely 5'-deoxyadenosine, S-adenosyl-L-homocysteine, and 5'-methylthioadenosine, to produce the inosine analogs. Can also deaminate adenosine. The preferred substrate for this enzyme is 5'-deoxyadenosine, but all these substrates are efficiently deaminated. Likely functions in a S-adenosyl-L-methionine (SAM) recycling pathway from S-adenosyl-L-homocysteine (SAH) produced from SAM-dependent methylation reactions. May also be involved in the recycling of 5'-deoxyadenosine, whereupon the 5'-deoxyribose moiety of 5'-deoxyinosine is further metabolized to deoxyhexoses used for the biosynthesis of aromatic amino acids in methanogens. This Methanosarcina barkeri (strain Fusaro / DSM 804) protein is 5'-deoxyadenosine deaminase.